The chain runs to 210 residues: Superoxide dismutase [Mn], mitochondrial (210 aa).

The Mn(2+) site is built by H29, H77, D164, and H168.

This sequence belongs to the iron/manganese superoxide dismutase family. Homotetramer. It depends on Mn(2+) as a cofactor.

The protein localises to the mitochondrion matrix. The enzyme catalyses 2 superoxide + 2 H(+) = H2O2 + O2. Destroys superoxide anion radicals which are normally produced within the cells and which are toxic to biological systems. This chain is Superoxide dismutase [Mn], mitochondrial (sodB), found in Aspergillus niger.